The sequence spans 425 residues: Protein let-756 (425 aa).

Disordered stretches follow at residues 277-298 (LEEK…LRKE) and 314-425 (EEEL…QRYP). The segment covering 281-291 (KRRREKKKRRR) has biased composition (basic residues). The span at 329-340 (ASTQTRYNRPQN) shows a compositional bias: polar residues. The segment covering 378–389 (HNSHHHHHHHPR) has biased composition (basic residues). Polar residues predominate over residues 395–425 (DPQQRHQSQQHYLAQTVSNPNRQNVNYQRYP).

It belongs to the heparin-binding growth factors family. Interacts with pal-1. Expressed in pharynx, CAN neuron and body wall muscles.

The protein localises to the nucleus. Its subcellular location is the membrane. Functionally, required for larval development. Probably by binding receptor egl-15, negatively regulates membrane protrusion from body wall muscles during larval development. The sequence is that of Protein let-756 (let-756) from Caenorhabditis elegans.